A 210-amino-acid polypeptide reads, in one-letter code: Putative 4-hydroxy-4-methyl-2-oxoglutarate aldolase (210 aa).

Substrate is bound by residues 87–90 and arginine 109; that span reads GDFV. Aspartate 110 is an a divalent metal cation binding site.

This sequence belongs to the class II aldolase/RraA-like family. Homotrimer. A divalent metal cation is required as a cofactor.

The enzyme catalyses 4-hydroxy-4-methyl-2-oxoglutarate = 2 pyruvate. It carries out the reaction oxaloacetate + H(+) = pyruvate + CO2. Its function is as follows. Catalyzes the aldol cleavage of 4-hydroxy-4-methyl-2-oxoglutarate (HMG) into 2 molecules of pyruvate. Also contains a secondary oxaloacetate (OAA) decarboxylase activity due to the common pyruvate enolate transition state formed following C-C bond cleavage in the retro-aldol and decarboxylation reactions. This is Putative 4-hydroxy-4-methyl-2-oxoglutarate aldolase from Halalkalibacterium halodurans (strain ATCC BAA-125 / DSM 18197 / FERM 7344 / JCM 9153 / C-125) (Bacillus halodurans).